Here is a 379-residue protein sequence, read N- to C-terminus: tRNA(Met) cytidine acetate ligase (379 aa).

ATP contacts are provided by residues 8–21 (IAEF…HEYL), Gly-97, Asn-153, and Arg-176.

It belongs to the TmcAL family.

It localises to the cytoplasm. It catalyses the reaction cytidine(34) in elongator tRNA(Met) + acetate + ATP = N(4)-acetylcytidine(34) in elongator tRNA(Met) + AMP + diphosphate. In terms of biological role, catalyzes the formation of N(4)-acetylcytidine (ac(4)C) at the wobble position of elongator tRNA(Met), using acetate and ATP as substrates. First activates an acetate ion to form acetyladenylate (Ac-AMP) and then transfers the acetyl group to tRNA to form ac(4)C34. The protein is tRNA(Met) cytidine acetate ligase of Lactococcus lactis subsp. cremoris (strain MG1363).